Here is a 555-residue protein sequence, read N- to C-terminus: (+)-delta-cadinene synthase isozyme A (555 aa).

The segment at 1–22 is disordered; that stretch reads MASQASQVLASPHPAISSENRP. The Mg(2+) site is built by Asp-308, Asp-312, Asp-452, and Glu-456. A DDXXD motif motif is present at residues 308–312; the sequence is DDTYD.

This sequence belongs to the terpene synthase family. It depends on Mg(2+) as a cofactor.

It carries out the reaction (2E,6E)-farnesyl diphosphate = (1S,8aR)-delta-cadinene + diphosphate. It participates in secondary metabolite biosynthesis; terpenoid biosynthesis. In terms of biological role, responsible for the cyclization of trans,trans-farnesyl diphosphate (FPP) to (+)-delta cadinene. The sequence is that of (+)-delta-cadinene synthase isozyme A (CAD1-A) from Gossypium arboreum (Tree cotton).